The chain runs to 250 residues: Coproheme decarboxylase (250 aa).

Fe-coproporphyrin III is bound by residues Arg131, Tyr145–Lys149, His172, and Gln185. Tyr145 is a catalytic residue.

Belongs to the ChdC family. Type 1 subfamily. Fe-coproporphyrin III is required as a cofactor.

It catalyses the reaction Fe-coproporphyrin III + 2 H2O2 + 2 H(+) = heme b + 2 CO2 + 4 H2O. The enzyme catalyses Fe-coproporphyrin III + H2O2 + H(+) = harderoheme III + CO2 + 2 H2O. The catalysed reaction is harderoheme III + H2O2 + H(+) = heme b + CO2 + 2 H2O. It functions in the pathway porphyrin-containing compound metabolism; protoheme biosynthesis. In terms of biological role, involved in coproporphyrin-dependent heme b biosynthesis. Catalyzes the decarboxylation of Fe-coproporphyrin III (coproheme) to heme b (protoheme IX), the last step of the pathway. The reaction occurs in a stepwise manner with a three-propionate intermediate. This chain is Coproheme decarboxylase, found in Staphylococcus aureus (strain MRSA252).